The sequence spans 288 residues: Putative transcription factor kapC (288 aa).

Residues 1-10 show a composition bias toward pro residues; sequence MQPTLAPAPH. The tract at residues 1 to 121 is disordered; the sequence is MQPTLAPAPH…AAQRAFRQRK (121 aa). A compositionally biased stretch (low complexity) spans 26-41; sequence HDQLLAAHQHLSHPQQ. Pro residues predominate over residues 42–54; the sequence is ARPPPPPPQPPHM. Over residues 84–93 the composition is skewed to polar residues; it reads QPDLSGQESP. The bZIP domain occupies 100–163; sequence PLSTSKRAAQ…EYIINLQSRL (64 aa). The basic motif stretch occupies residues 101–124; it reads LSTSKRAAQNRAAQRAFRQRKEAH. The span at 106–116 shows a compositional bias: low complexity; that stretch reads RAAQNRAAQRA. Positions 128–159 are leucine-zipper; sequence LEGKVKAYETMGEAIKALQAENYQLREYIINL. 2 disordered regions span residues 172–226 and 242–288; these read ELPG…NDDM and PPTE…PLIS. Residues 202 to 212 are compositionally biased toward pro residues; it reads PVPPPTAPQQP. Positions 213–222 are enriched in low complexity; the sequence is QPAQNQASAP.

Belongs to the bZIP family.

It localises to the nucleus. Putative transcription factor. The sequence is that of Putative transcription factor kapC (kapC) from Aspergillus clavatus (strain ATCC 1007 / CBS 513.65 / DSM 816 / NCTC 3887 / NRRL 1 / QM 1276 / 107).